A 443-amino-acid chain; its full sequence is EGF-containing fibulin-like extracellular matrix protein 2 (443 aa).

An N-terminal signal peptide occupies residues 1 to 25; that stretch reads MLPFASCLPGSLLLWALLLLLLGAA. Positions 36–81 constitute an EGF-like 1; atypical domain; that stretch reads YTECTDGYEWDADSQHCRDVNECLTIPEACKGEMKCINHYGGYLCL. Disulfide bonds link C58–C121, C65–C80, C71–C109, C127–C140, C134–C149, C151–C162, C168–C177, C173–C186, C188–C201, C207–C217, C213–C226, C228–C241, C247–C258, C254–C267, C269–C281, C287–C300, C294–C309, and C315–C327. One can recognise an EGF-like 2; calcium-binding domain in the interval 123–163; the sequence is DVDECAQALHDCRPSQDCHNLPGSYQCTCPDGYRKVGPECV. In terms of domain architecture, EGF-like 3; calcium-binding spans 164 to 202; it reads DIDECRYRYCQHRCVNLPGSFRCQCEPGFQLGPNNRSCV. N-linked (GlcNAc...) asparagine glycosylation is present at N198. The 40-residue stretch at 203–242 folds into the EGF-like 4; calcium-binding domain; it reads DVNECDMGAPCEQRCFNSYGTFLCRCNQGYELHRDGFSCS. The EGF-like 5; calcium-binding domain maps to 243–282; it reads DIDECSYSSYLCQYRCVNEPGRFSCHCPQGYQLLATRLCQ. The region spanning 283–328 is the EGF-like 6; calcium-binding domain; it reads DIDECETGAHQCSEAQTCVNFHGGYRCVDTNRCVEPYVQVSDNRCF. The N-linked (GlcNAc...) asparagine glycan is linked to N394.

It belongs to the fibulin family. Homodimer; disulfide-linked. Multimer; allows heparin binding. Monomer. Interacts with FBN1 (via N-terminal domain); this interaction inhibits EFEMP2 binding to LOX and ELN. Interacts with LOX (via propeptide); this interaction is strong and facilitates formation of ternary complexes with ELN during elastic fiber assembly; this interaction limits interaction of EFEMP2 with FBLN5. Interacts with PITX2. Interacts with ELN with moderate affinity; this interaction regulates ELN self-assembly maturation stage. Interacts with FBLN5 with moderate affinity. Interacts with LOXL1 (via propeptide), LTBP1 and TGFB1 stronger than with LOXL2 and LTBP3. Interacts with PCOLCE. Interacts with collagen type IV trimer (COL4A1-COL4A1-COL4A2), NID2 and moderately with COL15A1-derived endostatin. Interacts with EMILIN1; this interaction promotes the incorporation of EFEMP2 into the extracellular matrix. Interacts with LTBP4; the LTBP4 long form (LTBP4L) has a stronger binding affinity than the LTBP4 short form and the LTBP4 long form promotes fibrillar deposition of EFEMP2. N-glycosylated; contains mostly complex-type glycans. Not O-glycosylated. Post-translationally, cleaved by ELANE; produces a 50-55 kDa fragment. Cleaved by MMP2 and MMP9; produces several fragments.

The protein resides in the secreted. The protein localises to the extracellular space. It localises to the extracellular matrix. It is found in the basement membrane. Its function is as follows. Plays a crucial role in elastic fiber formation in tissue, and in the formation of ultrastructural connections between elastic laminae and smooth muscle cells in the aorta, therefore participates in terminal differentiation and maturation of smooth muscle cell (SMC) and in the mechanical properties and wall integrity maintenance of the aorta. In addition, is involved in the control of collagen fibril assembly in tissue throught proteolytic activation of LOX leading to cross- linking of collagen and elastin. Also promotes ELN coacervation and participates in the deposition of ELN coacervates on to microfibrils but also regulates ELN cross- linking through LOX interaction. Moreover adheres to the cells through heparin binding in a calcium-dependent manner and regulates vascularlar smooth muscle cells proliferation through angiotensin signaling. In Cricetulus griseus (Chinese hamster), this protein is EGF-containing fibulin-like extracellular matrix protein 2.